The sequence spans 488 residues: UDP-N-acetylmuramoyl-L-alanyl-D-glutamate--2,6-diaminopimelate ligase (488 aa).

UDP-N-acetyl-alpha-D-muramoyl-L-alanyl-D-glutamate is bound at residue S31. 109 to 115 provides a ligand contact to ATP; that stretch reads GTNGKTS. UDP-N-acetyl-alpha-D-muramoyl-L-alanyl-D-glutamate contacts are provided by residues N150, 151–152, S178, and R186; that span reads TT. An N6-carboxylysine modification is found at K218. Residues R384, 408–411, G458, and E462 each bind meso-2,6-diaminopimelate; that span reads DNPR. Residues 408-411 carry the Meso-diaminopimelate recognition motif motif; it reads DNPR.

It belongs to the MurCDEF family. MurE subfamily. Mg(2+) is required as a cofactor. Carboxylation is probably crucial for Mg(2+) binding and, consequently, for the gamma-phosphate positioning of ATP.

The protein localises to the cytoplasm. The enzyme catalyses UDP-N-acetyl-alpha-D-muramoyl-L-alanyl-D-glutamate + meso-2,6-diaminopimelate + ATP = UDP-N-acetyl-alpha-D-muramoyl-L-alanyl-gamma-D-glutamyl-meso-2,6-diaminopimelate + ADP + phosphate + H(+). It participates in cell wall biogenesis; peptidoglycan biosynthesis. Its function is as follows. Catalyzes the addition of meso-diaminopimelic acid to the nucleotide precursor UDP-N-acetylmuramoyl-L-alanyl-D-glutamate (UMAG) in the biosynthesis of bacterial cell-wall peptidoglycan. This Bacillus licheniformis (strain ATCC 14580 / DSM 13 / JCM 2505 / CCUG 7422 / NBRC 12200 / NCIMB 9375 / NCTC 10341 / NRRL NRS-1264 / Gibson 46) protein is UDP-N-acetylmuramoyl-L-alanyl-D-glutamate--2,6-diaminopimelate ligase.